The following is a 284-amino-acid chain: Bifunctional protein FolD (284 aa).

Residues 166-168 (GAS) and Ile232 each bind NADP(+).

The protein belongs to the tetrahydrofolate dehydrogenase/cyclohydrolase family. As to quaternary structure, homodimer.

The enzyme catalyses (6R)-5,10-methylene-5,6,7,8-tetrahydrofolate + NADP(+) = (6R)-5,10-methenyltetrahydrofolate + NADPH. It carries out the reaction (6R)-5,10-methenyltetrahydrofolate + H2O = (6R)-10-formyltetrahydrofolate + H(+). It functions in the pathway one-carbon metabolism; tetrahydrofolate interconversion. Catalyzes the oxidation of 5,10-methylenetetrahydrofolate to 5,10-methenyltetrahydrofolate and then the hydrolysis of 5,10-methenyltetrahydrofolate to 10-formyltetrahydrofolate. The protein is Bifunctional protein FolD of Stutzerimonas stutzeri (strain A1501) (Pseudomonas stutzeri).